Consider the following 653-residue polypeptide: MVLVEYLWMVIVGFIIAFILAFSVGANDVANSFGTAVGSGVVTLRQACILASIFETTGSVLLGAKVGETIRKGIIDVNLYNNTVDLLMAGEVSAMVGSAVWQLIASFLRLPISGTHCIVGATIGFSLVAIGTHGVQWMQLVKIVASWFISPLLSGLMSGALFLMIKFFILKKEDPVPNGLKALPVFYAATIGINVFSILYTGAPLLGLESFPVWATALLSIGIAIIFALIVWFFVCPWMKKKIASRLKKEGALSRISEESLDKIQDEETSVFKELPGAKGNDESALPLTSSSTDAAVASDSVSNGNTRVPYGRAASMTNGSIRSPISNGTFNFDGHTVKSDVHVYHTVHKDSGLYKDLLHNIHLDRVKTDRPAPENNYRVLRRNNSYTCYTAAICGVPVHSTFKSSDVAMPEDSEKLVGDTVSYSKKRVRYDSYSSYCNAVAEAEIEAEEGGVEMKLATDLADPNPPQDDSLEEDKEEKDKSEVHLLFHFLQILTACFGSFAHGGNDVSNAIGPLVALWLIYEQGGVMQEASTPVWLLLYGGVGICAGLWVWGRRVIQTMGKDLTPITPSSGFTIELASAFTVVVASNIGLPISTTHCKVGSVVAVGWIRSRKAVDWRLFRNIFLAWFVTVPVAGLFSAGVMAILQYGILPYV.

Residue Met-1 is a topological domain, extracellular. A helical membrane pass occupies residues 2-22; it reads VLVEYLWMVIVGFIIAFILAF. Residues 23–46 are Cytoplasmic-facing; it reads SVGANDVANSFGTAVGSGVVTLRQ. A helical membrane pass occupies residues 47–67; the sequence is ACILASIFETTGSVLLGAKVG. At 68–86 the chain is on the extracellular side; it reads ETIRKGIIDVNLYNNTVDL. A glycan (N-linked (GlcNAc...) asparagine) is linked at Asn-81. A helical transmembrane segment spans residues 87-107; the sequence is LMAGEVSAMVGSAVWQLIASF. Residues 108 to 109 lie on the Cytoplasmic side of the membrane; sequence LR. A helical transmembrane segment spans residues 110-130; the sequence is LPISGTHCIVGATIGFSLVAI. The Extracellular segment spans residues 131-142; it reads GTHGVQWMQLVK. Residues 143 to 163 traverse the membrane as a helical segment; it reads IVASWFISPLLSGLMSGALFL. The Cytoplasmic portion of the chain corresponds to 164-187; it reads MIKFFILKKEDPVPNGLKALPVFY. The helical transmembrane segment at 188 to 208 threads the bilayer; that stretch reads AATIGINVFSILYTGAPLLGL. Residues 209–217 are Extracellular-facing; that stretch reads ESFPVWATA. The helical transmembrane segment at 218 to 238 threads the bilayer; that stretch reads LLSIGIAIIFALIVWFFVCPW. Over 239–483 the chain is Cytoplasmic; it reads MKKKIASRLK…EDKEEKDKSE (245 aa). Residues 484–504 form a helical membrane-spanning segment; it reads VHLLFHFLQILTACFGSFAHG. Residues 505 to 532 lie on the Extracellular side of the membrane; that stretch reads GNDVSNAIGPLVALWLIYEQGGVMQEAS. A helical transmembrane segment spans residues 533–553; sequence TPVWLLLYGGVGICAGLWVWG. The Cytoplasmic portion of the chain corresponds to 554–572; that stretch reads RRVIQTMGKDLTPITPSSG. Residues 573–587 form a helical membrane-spanning segment; sequence FTIELASAFTVVVAS. The Extracellular segment spans residues 588–594; it reads NIGLPIS. The chain crosses the membrane as a helical span at residues 595 to 610; the sequence is TTHCKVGSVVAVGWIR. Over 611–622 the chain is Cytoplasmic; sequence SRKAVDWRLFRN. The chain crosses the membrane as a helical span at residues 623–643; it reads IFLAWFVTVPVAGLFSAGVMA. The Extracellular portion of the chain corresponds to 644–653; sequence ILQYGILPYV.

Belongs to the inorganic phosphate transporter (PiT) (TC 2.A.20) family. As to quaternary structure, homodimer.

The protein resides in the cell membrane. The protein localises to the apical cell membrane. It catalyses the reaction 2 Na(+)(out) + phosphate(out) = 2 Na(+)(in) + phosphate(in). Functionally, sodium-phosphate symporter which preferentially transports the monovalent form of phosphate with a stoichiometry of two sodium ions per phosphate ion. This is Sodium-dependent phosphate transporter 2 (slc20a2) from Xenopus tropicalis (Western clawed frog).